Here is a 527-residue protein sequence, read N- to C-terminus: Nucleus accumbens-associated protein 1 (527 aa).

Residues 30 to 94 (CDVSVVVKGH…CYTGRLSMNV (65 aa)) form the BTB domain. Residues 131-153 (QGLHAEEAPSSEPQSPVAQTSGW) form a disordered region. The segment covering 141–152 (SEPQSPVAQTSG) has biased composition (polar residues). Lys167 participates in a covalent cross-link: Glycyl lysine isopeptide (Lys-Gly) (interchain with G-Cter in SUMO1); alternate. Residue Lys167 forms a Glycyl lysine isopeptide (Lys-Gly) (interchain with G-Cter in SUMO2); alternate linkage. A Glycyl lysine isopeptide (Lys-Gly) (interchain with G-Cter in SUMO2) cross-link involves residue Lys183. Ser188 carries the post-translational modification Phosphoserine. Residues 210-292 (DLAANRPHQP…DEEEDGGEEG (83 aa)) form a disordered region. The segment covering 225–251 (APVVAAAQPAVAAGAGQPAGGVAAAGG) has biased composition (low complexity). Positions 255 to 277 (GPSTSERTSPGTSSAYTSDSPGS) are enriched in polar residues. The residue at position 259 (Ser259) is a Phosphoserine; by PKC. The segment covering 281–292 (EEDEEEDGGEEG) has biased composition (acidic residues). Glycyl lysine isopeptide (Lys-Gly) (interchain with G-Cter in SUMO2) cross-links involve residues Lys318, Lys452, Lys480, Lys483, and Lys498. A BEN domain is found at 374–471 (GTNVYITRAQ…DMCTNARRVV (98 aa)).

Homooligomer; mediated by the BTB domain. Interacts with HDAC3 and HDAC4. Interacts (via BTB domain) with CUL3, PSMD7 and RCOR1. In terms of tissue distribution, overexpressed in several types of carcinomas including ovarian serous carcinomas. Expression levels positively correlate with tumor recurrence in ovarian serous carcinomas, and intense immunoreactivity in primary ovarian tumors predicts early recurrence. Up-regulated in ovarian carcinomas after chemotherapy, suggesting a role in development of chemotherapy resistance in ovarian cancer.

It localises to the nucleus. The protein resides in the cytoplasm. Its function is as follows. Functions as a transcriptional repressor. Seems to function as a transcriptional corepressor in neuronal cells through recruitment of HDAC3 and HDAC4. Contributes to tumor progression, and tumor cell proliferation and survival. This may be mediated at least in part through repressing transcriptional activity of GADD45GIP1. Required for recruiting the proteasome from the nucleus to the cytoplasm and dendritic spines. The sequence is that of Nucleus accumbens-associated protein 1 (NACC1) from Homo sapiens (Human).